The following is a 57-amino-acid chain: COP9 signalosome complex subunit 9 (57 aa).

Position 26 is a phosphothreonine (Thr-26).

The protein belongs to the CSN9 family. In terms of assembly, component of the CSN complex, composed of COPS1/GPS1, COPS2, COPS3, COPS4, COPS5, COPS6, COPS7 (COPS7A or COPS7B), COPS8 and COPS9. In the complex, it interacts directly with COPS3, COPS5 and COPS6.

Its subcellular location is the nucleus. The protein resides in the cytoplasm. It is found in the nucleoplasm. Component of the COP9 signalosome complex (CSN), a complex involved in various cellular and developmental processes. The CSN complex is an essential regulator of the ubiquitin (Ubl) conjugation pathway by mediating the deneddylation of the cullin subunits of SCF-type E3 ligase complexes, leading to decrease the Ubl ligase activity of SCF-type complexes such as SCF, CSA or DDB2. The complex is also involved in phosphorylation of p53/TP53, c-jun/JUN, IkappaBalpha/NFKBIA, ITPK1 and IRF8/ICSBP, possibly via its association with CK2 and PKD kinases. CSN-dependent phosphorylation of TP53 and JUN promotes and protects degradation by the Ubl system, respectively. Plays a role in cell proliferation. The polypeptide is COP9 signalosome complex subunit 9 (Bos taurus (Bovine)).